The chain runs to 331 residues: L-lactate dehydrogenase A chain (331 aa).

Residues 29 to 57 and Arg98 contribute to the NAD(+) site; that span reads GMVG…MEDK. Substrate is bound by residues Arg105, Asn137, and Arg168. Asn137 is an NAD(+) binding site. His192 (proton acceptor) is an active-site residue. Substrate is bound at residue Thr247.

This sequence belongs to the LDH/MDH superfamily. LDH family. In terms of assembly, homotetramer.

The protein localises to the cytoplasm. It catalyses the reaction (S)-lactate + NAD(+) = pyruvate + NADH + H(+). Its pathway is fermentation; pyruvate fermentation to lactate; (S)-lactate from pyruvate: step 1/1. Functionally, interconverts simultaneously and stereospecifically pyruvate and lactate with concomitant interconversion of NADH and NAD(+). This is L-lactate dehydrogenase A chain (ldha) from Chaenocephalus aceratus (Blackfin icefish).